A 530-amino-acid chain; its full sequence is AAA-ATPase At3g28510 (530 aa).

A helical transmembrane segment spans residues 5-25 (GAIWGITGTTVTSFMFFWAIY). 250 to 257 (GPPGTGKS) serves as a coordination point for ATP. Disordered regions lie at residues 312–339 (QRKK…KVDD) and 463–530 (KARK…KSDS). Basic and acidic residues-rich tracts occupy residues 326-339 (EEKK…KVDD) and 463-511 (KARK…KEEN). A compositionally biased stretch (polar residues) spans 512–523 (GNVSQQNGNSID).

This sequence belongs to the AAA ATPase family. BCS1 subfamily. Requires Mg(2+) as cofactor.

It is found in the membrane. It catalyses the reaction ATP + H2O = ADP + phosphate + H(+). The chain is AAA-ATPase At3g28510 from Arabidopsis thaliana (Mouse-ear cress).